Here is a 265-residue protein sequence, read N- to C-terminus: Ribonuclease 3 (265 aa).

The region spanning 34-157 is the RNase III domain; the sequence is LAVLTRKLGY…LIGAIYLDSQ (124 aa). Glu70 provides a ligand contact to Mg(2+). The active site involves Asp74. Mg(2+) is bound by residues Asp143 and Glu146. Glu146 is an active-site residue. In terms of domain architecture, DRBM spans 185–256; that stretch reads DAKSRLQEWL…AELMINQLHK (72 aa).

This sequence belongs to the ribonuclease III family. As to quaternary structure, homodimer. Mg(2+) serves as cofactor.

The protein localises to the cytoplasm. The enzyme catalyses Endonucleolytic cleavage to 5'-phosphomonoester.. Digests double-stranded RNA. Involved in the processing of primary rRNA transcript to yield the immediate precursors to the large and small rRNAs (23S and 16S). Processes some mRNAs, and tRNAs when they are encoded in the rRNA operon. Processes pre-crRNA and tracrRNA of type II CRISPR loci if present in the organism. The chain is Ribonuclease 3 from Psychrobacter arcticus (strain DSM 17307 / VKM B-2377 / 273-4).